The primary structure comprises 536 residues: MKHPTVALLGVGMLGCAAALPAGQVANGAQDDPVPAARTAPATAATAPADFGATSDPSIAGTGFPGLAGFPGFPGSGAAQAGPVHAPSTFGPAAGPAGFQGLSGGPGFAFPGFGGGSGFGFTGFGGMSAFPGIPGFGGLQGSAPSQAAAAPSTGDSRSGLPGFPGVSGGSGFGFPSFGGMSASPSLPGFGGLQGSGPSQAAAAPSTGDSGSGLPGSPGFSGGSGFGFPGFGGMSAGGGAPSTMGFPGFPGFTGFPGMTGGFGVPGSAPDQGASTPAQAASFPAAGRAGNAIPSASSAPASNGMGAAASLHNLQARQFVGTTGHGMVPPAXGSGLPGSPGFSGGSGFGFPGFGGMSAGGGAPSTMGFPGFPGFTGFPGMTGGFGVPGSAPDQGASTPAQAASFPAAGRAGNAIPSASSAPASNGMGAAASLHNLQARQFVGTTGHGMVPPAFHYMFGWPPVIPSAAGAMPNLGTGFNADAFGAEFLGGGEMPSPTSTAASVAPTANSVPATGTAEASTSTPVASAATSAVSATSSAE.

Positions 1 to 19 (MKHPTVALLGVGMLGCAAA) are cleaved as a signal peptide. Disordered regions lie at residues 141 to 164 (GSAP…PGFP), 185 to 220 (SLPG…PGFS), 261 to 302 (FGVP…ASNG), 385 to 423 (PGSA…ASNG), and 491 to 536 (PSPT…SSAE). The segment covering 195 to 208 (SGPSQAAAAPSTGD) has biased composition (low complexity). The span at 209–220 (SGSGLPGSPGFS) shows a compositional bias: gly residues. Composition is skewed to low complexity over residues 287–302 (AGNA…ASNG) and 408–423 (AGNA…ASNG).

It functions in the pathway secondary metabolite biosynthesis; terpenoid biosynthesis. Its function is as follows. Part of the gene cluster that mediates the biosynthesis of calidodehydroaustin, a fungal meroterpenoid. The first step of the pathway is the synthesis of 3,5-dimethylorsellinic acid by the polyketide synthase ausA. 3,5-dimethylorsellinic acid is then prenylated by the polyprenyl transferase ausN. Further epoxidation by the FAD-dependent monooxygenase ausM and cyclization by the probable terpene cyclase ausL lead to the formation of protoaustinoid A. Protoaustinoid A is then oxidized to spiro-lactone preaustinoid A3 by the combined action of the FAD-binding monooxygenases ausB and ausC, and the dioxygenase ausE. Acid-catalyzed keto-rearrangement and ring contraction of the tetraketide portion of preaustinoid A3 by ausJ lead to the formation of preaustinoid A4. The aldo-keto reductase ausK, with the help of ausH, is involved in the next step by transforming preaustinoid A4 into isoaustinone which is in turn hydroxylated by the P450 monooxygenase ausI to form austinolide. The cytochrome P450 monooxygenase ausG modifies austinolide to austinol. Austinol is further acetylated to austin by the O-acetyltransferase ausP, which spontaneously changes to dehydroaustin. The cytochrome P450 monooxygenase ausR then converts dehydroaustin is into 7-dehydrodehydroaustin. The hydroxylation catalyzed by ausR permits the O-acetyltransferase ausQ to add an additional acetyl group to the molecule, leading to the formation of acetoxydehydroaustin. The short chain dehydrogenase ausT catalyzes the reduction of the double bond present between carbon atoms 1 and 2 to convert 7-dehydrodehydroaustin into 1,2-dihydro-7-hydroxydehydroaustin. AusQ catalyzes not only an acetylation reaction but also the addition of the PKS ausV diketide product to 1,2-dihydro-7-hydroxydehydroaustin, forming precalidodehydroaustin. Finally, the iron/alpha-ketoglutarate-dependent dioxygenase converts precalidodehydroaustin into calidodehydroaustin. In Aspergillus calidoustus, this protein is Austinoid biosynthesis cluster protein W.